We begin with the raw amino-acid sequence, 303 residues long: Probable cell division protein WhiA (303 aa).

Residues 272–303 constitute a DNA-binding region (H-T-H motif); that stretch reads SIQQIADSIEPPLTKSGVNHRLRKINKIADDL.

This sequence belongs to the WhiA family.

Its function is as follows. Involved in cell division and chromosome segregation. The polypeptide is Probable cell division protein WhiA (Streptococcus thermophilus (strain ATCC BAA-250 / LMG 18311)).